The sequence spans 358 residues: MLPQDKLDLILRRHEEISARLTENPDAATFVSLSRELAGLDEVAQAIRAYRDEMTEISGMEAMLADPATEPELLALAEEELQDARQRLGAFEQHLRIALLPKDADDEKSAILEIRAGTGGDEAALFAGDLFRMYQRYAEAKGWGVEILSVSEGTAGGYKEIVAEITGKGVFAKLKFESGTHRVQRVPDTETQGRIHTSAATVAVLPQAEEVDVEINEADLKIDTMRAQGAGGQHVNKTESAIRITHLPTGTVIFVQDERSQHKNRARAMSLLRSRIYDAKRQQLEAERAADRKAQVGSGDRSERIRTYNFPQGRLTDHRINLTLYKLDKVMTGEALDEVIDALITDYQAAQLAASEGA.

Gln-233 carries the N5-methylglutamine modification.

The protein belongs to the prokaryotic/mitochondrial release factor family. Post-translationally, methylated by PrmC. Methylation increases the termination efficiency of RF1.

It localises to the cytoplasm. In terms of biological role, peptide chain release factor 1 directs the termination of translation in response to the peptide chain termination codons UAG and UAA. The protein is Peptide chain release factor 1 of Beijerinckia indica subsp. indica (strain ATCC 9039 / DSM 1715 / NCIMB 8712).